Consider the following 94-residue polypeptide: CRISPR-associated endoribonuclease Cas2 (94 aa).

A Mg(2+)-binding site is contributed by aspartate 10.

This sequence belongs to the CRISPR-associated endoribonuclease Cas2 protein family. In terms of assembly, homodimer, forms a heterotetramer with a Cas1 homodimer. Requires Mg(2+) as cofactor.

Functionally, CRISPR (clustered regularly interspaced short palindromic repeat), is an adaptive immune system that provides protection against mobile genetic elements (viruses, transposable elements and conjugative plasmids). CRISPR clusters contain sequences complementary to antecedent mobile elements and target invading nucleic acids. CRISPR clusters are transcribed and processed into CRISPR RNA (crRNA). Functions as a ssRNA-specific endoribonuclease. Involved in the integration of spacer DNA into the CRISPR cassette. The protein is CRISPR-associated endoribonuclease Cas2 of Leptospira interrogans serogroup Icterohaemorrhagiae serovar Lai (strain 56601).